The following is a 101-amino-acid chain: STAS-domain containing protein PA14_20770 (101 aa).

An STAS domain is found at Leu-14–Ser-101.

In terms of processing, phosphorylated on a serine residue, possibly on Ser-56.

It is found in the secreted. The sequence is that of STAS-domain containing protein PA14_20770 from Pseudomonas aeruginosa (strain UCBPP-PA14).